Reading from the N-terminus, the 78-residue chain is Large ribosomal subunit protein eL20 (78 aa).

Belongs to the eukaryotic ribosomal protein eL20 family. As to quaternary structure, part of the 50S ribosomal subunit. Binds 23S rRNA.

The sequence is that of Large ribosomal subunit protein eL20 from Nanoarchaeum equitans (strain Kin4-M).